A 461-amino-acid chain; its full sequence is Ornithine decarboxylase (461 aa).

At Lys69 the chain carries N6-(pyridoxal phosphate)lysine. Residues Ser200, Gly237, and 274-277 contribute to the pyridoxal 5'-phosphate site; that span reads EPGR. Ser303 carries the post-translational modification Phosphoserine; by CK2. 331–332 provides a ligand contact to substrate; sequence YD. Residue Cys360 is the Proton donor; shared with dimeric partner of the active site. Cys360 carries the post-translational modification S-nitrosocysteine. Asp361 contributes to the substrate binding site. Residue Tyr389 coordinates pyridoxal 5'-phosphate.

It belongs to the Orn/Lys/Arg decarboxylase class-II family. In terms of assembly, homodimer. Only the dimer is catalytically active, as the active sites are constructed of residues from both monomers. Pyridoxal 5'-phosphate is required as a cofactor.

It catalyses the reaction L-ornithine + H(+) = putrescine + CO2. The protein operates within amine and polyamine biosynthesis; putrescine biosynthesis via L-ornithine pathway; putrescine from L-ornithine: step 1/1. With respect to regulation, inhibited by antizymes (AZs) OAZ1, OAZ2 and OAZ3 in response to polyamine levels. AZs inhibit the assembly of the functional homodimer by binding to ODC monomers. Additionally, OAZ1 targets ODC monomers for ubiquitin-independent proteolytic destruction by the 26S proteasome. Functionally, catalyzes the first and rate-limiting step of polyamine biosynthesis that converts ornithine into putrescine, which is the precursor for the polyamines, spermidine and spermine. Polyamines are essential for cell proliferation and are implicated in cellular processes, ranging from DNA replication to apoptosis. The protein is Ornithine decarboxylase (Odc1) of Mus pahari (Gairdner's shrew-mouse).